A 382-amino-acid chain; its full sequence is Carbamoyl phosphate synthase small chain (382 aa).

Residues M1–E189 are CPSase. L-glutamine is bound by residues S47, G241, and G243. Residues H193–S380 form the Glutamine amidotransferase type-1 domain. C269 acts as the Nucleophile in catalysis. L270, Q273, N311, G313, and F314 together coordinate L-glutamine. Catalysis depends on residues H353 and E355.

The protein belongs to the CarA family. As to quaternary structure, composed of two chains; the small (or glutamine) chain promotes the hydrolysis of glutamine to ammonia, which is used by the large (or ammonia) chain to synthesize carbamoyl phosphate. Tetramer of heterodimers (alpha,beta)4.

It carries out the reaction hydrogencarbonate + L-glutamine + 2 ATP + H2O = carbamoyl phosphate + L-glutamate + 2 ADP + phosphate + 2 H(+). The enzyme catalyses L-glutamine + H2O = L-glutamate + NH4(+). The protein operates within amino-acid biosynthesis; L-arginine biosynthesis; carbamoyl phosphate from bicarbonate: step 1/1. It participates in pyrimidine metabolism; UMP biosynthesis via de novo pathway; (S)-dihydroorotate from bicarbonate: step 1/3. Functionally, small subunit of the glutamine-dependent carbamoyl phosphate synthetase (CPSase). CPSase catalyzes the formation of carbamoyl phosphate from the ammonia moiety of glutamine, carbonate, and phosphate donated by ATP, constituting the first step of 2 biosynthetic pathways, one leading to arginine and/or urea and the other to pyrimidine nucleotides. The small subunit (glutamine amidotransferase) binds and cleaves glutamine to supply the large subunit with the substrate ammonia. The chain is Carbamoyl phosphate synthase small chain from Pectobacterium atrosepticum (strain SCRI 1043 / ATCC BAA-672) (Erwinia carotovora subsp. atroseptica).